The sequence spans 518 residues: Cell wall biosynthesis protein LcpA (518 aa).

The Cytoplasmic segment spans residues 1–31 (MTEKYRPVRDIKPAPAAMQSTKQAGHPVFRS). A helical membrane pass occupies residues 32-52 (VVAFVSVLVLLVSGLGYLAVG). The Periplasmic portion of the chain corresponds to 53 to 518 (KVDGVASGNL…AGGDGPRCVN (466 aa)). Residues 485–518 (AVTSSTVGQPGADVGEPIESPEFDAGGDGPRCVN) form a disordered region.

It belongs to the LytR/CpsA/Psr (LCP) family. Forms homodimers and homotetramers.

The protein resides in the cell inner membrane. Involved in cell wall biosynthesis. May be responsible for the transfer of arabinogalactan onto peptidoglycan. In vitro, has pyrophosphatase activity. The polypeptide is Cell wall biosynthesis protein LcpA (Corynebacterium glutamicum (strain ATCC 13032 / DSM 20300 / JCM 1318 / BCRC 11384 / CCUG 27702 / LMG 3730 / NBRC 12168 / NCIMB 10025 / NRRL B-2784 / 534)).